The sequence spans 198 residues: Imidazoleglycerol-phosphate dehydratase (198 aa).

Belongs to the imidazoleglycerol-phosphate dehydratase family.

Its subcellular location is the cytoplasm. The catalysed reaction is D-erythro-1-(imidazol-4-yl)glycerol 3-phosphate = 3-(imidazol-4-yl)-2-oxopropyl phosphate + H2O. It participates in amino-acid biosynthesis; L-histidine biosynthesis; L-histidine from 5-phospho-alpha-D-ribose 1-diphosphate: step 6/9. The protein is Imidazoleglycerol-phosphate dehydratase of Magnetococcus marinus (strain ATCC BAA-1437 / JCM 17883 / MC-1).